A 545-amino-acid chain; its full sequence is CTP synthase (545 aa).

Positions 1–267 (MTKFIFVTGG…AEQTLKLLQM (267 aa)) are amidoligase domain. Ser13 is a binding site for CTP. Position 13 (Ser13) interacts with UTP. Residues 14–19 (SIGKGI) and Asp71 contribute to the ATP site. 2 residues coordinate Mg(2+): Asp71 and Glu141. Residues 148 to 150 (DIE), 188 to 193 (KTKPTQ), and Lys224 contribute to the CTP site. UTP contacts are provided by residues 188 to 193 (KTKPTQ) and Lys224. The Glutamine amidotransferase type-1 domain maps to 292 to 534 (EIAIVGKYVS…VQAAIAQSHP (243 aa)). Gly354 contacts L-glutamine. Cys381 (nucleophile; for glutamine hydrolysis) is an active-site residue. Residues 382–385 (LGMQ), Glu405, and Arg462 contribute to the L-glutamine site. Active-site residues include His507 and Glu509.

It belongs to the CTP synthase family. In terms of assembly, homotetramer.

The enzyme catalyses UTP + L-glutamine + ATP + H2O = CTP + L-glutamate + ADP + phosphate + 2 H(+). The catalysed reaction is L-glutamine + H2O = L-glutamate + NH4(+). It catalyses the reaction UTP + NH4(+) + ATP = CTP + ADP + phosphate + 2 H(+). It functions in the pathway pyrimidine metabolism; CTP biosynthesis via de novo pathway; CTP from UDP: step 2/2. With respect to regulation, allosterically activated by GTP, when glutamine is the substrate; GTP has no effect on the reaction when ammonia is the substrate. The allosteric effector GTP functions by stabilizing the protein conformation that binds the tetrahedral intermediate(s) formed during glutamine hydrolysis. Inhibited by the product CTP, via allosteric rather than competitive inhibition. In terms of biological role, catalyzes the ATP-dependent amination of UTP to CTP with either L-glutamine or ammonia as the source of nitrogen. Regulates intracellular CTP levels through interactions with the four ribonucleotide triphosphates. This chain is CTP synthase, found in Trichormus variabilis (strain ATCC 29413 / PCC 7937) (Anabaena variabilis).